A 987-amino-acid polypeptide reads, in one-letter code: Leucine--tRNA ligase (987 aa).

Positions 69 to 80 (PYPSGKGLHVGH) match the 'HIGH' region motif. Positions 760–764 (KMGKS) match the 'KMSKS' region motif. K763 contributes to the ATP binding site.

The protein belongs to the class-I aminoacyl-tRNA synthetase family.

The protein resides in the cytoplasm. The catalysed reaction is tRNA(Leu) + L-leucine + ATP = L-leucyl-tRNA(Leu) + AMP + diphosphate. The protein is Leucine--tRNA ligase of Bifidobacterium longum (strain NCC 2705).